The chain runs to 309 residues: Protein FdhE (309 aa).

The protein belongs to the FdhE family.

The protein localises to the cytoplasm. Functionally, necessary for formate dehydrogenase activity. This Escherichia coli O45:K1 (strain S88 / ExPEC) protein is Protein FdhE.